The following is a 155-amino-acid chain: Probable jacalin-related lectin 26 (155 aa).

The next 2 helical transmembrane spans lie at 26-48 and 127-149; these read AYLY…IAMI and VSFV…VLFL. The Jacalin-type lectin domain occupies 47-155; that stretch reads MIRAGSVGKK…VLFLMKFKRS (109 aa).

This sequence belongs to the jacalin lectin family.

It localises to the membrane. This chain is Probable jacalin-related lectin 26 (JAL26), found in Arabidopsis thaliana (Mouse-ear cress).